A 391-amino-acid polypeptide reads, in one-letter code: Casein kinase II subunit alpha (391 aa).

The interval 36–41 (QDDYQL) is interaction with beta subunit. A Protein kinase domain is found at 39–324 (YQLVRKLGRG…AREAMEHPYF (286 aa)). Residues 45–53 (LGRGKYSEV) and Lys-68 each bind ATP. The active-site Proton acceptor is the Asp-156. A phosphothreonine; by CDK1 mark is found at Thr-344 and Thr-360. 2 positions are modified to phosphoserine; by CDK1: Ser-362 and Ser-370.

It belongs to the protein kinase superfamily. Ser/Thr protein kinase family. CK2 subfamily. In terms of assembly, heterotetramer composed of two catalytic subunits (alpha chain and/or alpha' chain) and two regulatory subunits (beta chains). The tetramer can exist as a combination of 2 alpha/2 beta, 2 alpha'/2 beta or 1 alpha/1 alpha'/2 beta subunits. Also part of a CK2-SPT16-SSRP1 complex composed of SSRP1, SUPT16H, CSNK2A1, CSNK2A2 and CSNK2B, which forms following UV irradiation. Interacts with RNPS1. Interacts with SNAI1. Interacts with PML. Interacts with CCAR2. Interacts with HIRIP3. Phosphorylated at Thr-344, Thr-360, Ser-362 and Ser-370 by CDK1 in prophase and metaphase and dephosphorylated during anaphase. Phosphorylation does not directly affect casein kinase 2 activity, but may contribute to its regulation by forming binding sites for interacting proteins and/or targeting it to different compartments.

It localises to the nucleus. It catalyses the reaction L-seryl-[protein] + ATP = O-phospho-L-seryl-[protein] + ADP + H(+). It carries out the reaction L-threonyl-[protein] + ATP = O-phospho-L-threonyl-[protein] + ADP + H(+). With respect to regulation, constitutively active protein kinase whose activity is not directly affected by phosphorylation. Seems to be regulated by level of expression and localization. Catalytic subunit of a constitutively active serine/threonine-protein kinase complex that phosphorylates a large number of substrates containing acidic residues C-terminal to the phosphorylated serine or threonine. Regulates numerous cellular processes, such as cell cycle progression, apoptosis and transcription, as well as viral infection. May act as a regulatory node which integrates and coordinates numerous signals leading to an appropriate cellular response. During mitosis, functions as a component of the p53/TP53-dependent spindle assembly checkpoint (SAC) that maintains cyclin-B-CDK1 activity and G2 arrest in response to spindle damage. Also required for p53/TP53-mediated apoptosis, phosphorylating 'Ser-392' of p53/TP53 following UV irradiation. Phosphorylates a number of DNA repair proteins in response to DNA damage, such as MDC1, MRE11, RAD9A, RAD51 and HTATSF1, promoting their recruitment to DNA damage sites. Can also negatively regulate apoptosis. Phosphorylates the caspases CASP9 and CASP2 and the apoptotic regulator NOL3. Phosphorylation protects CASP9 from cleavage and activation by CASP8, and inhibits the dimerization of CASP2 and activation of CASP8. Phosphorylates YY1, protecting YY1 from cleavage by CASP7 during apoptosis. Regulates transcription by direct phosphorylation of RNA polymerases I, II, III and IV. Also phosphorylates and regulates numerous transcription factors including NF-kappa-B, STAT1, CREB1, IRF1, IRF2, ATF1, ATF4, SRF, MAX, JUN, FOS, MYC and MYB. Phosphorylates Hsp90 and its co-chaperones FKBP4 and CDC37, which is essential for chaperone function. Mediates sequential phosphorylation of FNIP1, promoting its gradual interaction with Hsp90, leading to activate both kinase and non-kinase client proteins of Hsp90. Regulates Wnt signaling by phosphorylating CTNNB1 and the transcription factor LEF1. Acts as an ectokinase that phosphorylates several extracellular proteins. Phosphorylates PML at 'Ser-565' and primes it for ubiquitin-mediated degradation. Plays an important role in the circadian clock function by phosphorylating BMAL1 at 'Ser-90' which is pivotal for its interaction with CLOCK and which controls CLOCK nuclear entry. Phosphorylates FMR1, promoting FMR1-dependent formation of a membraneless compartment. May phosphorylate histone H2A on 'Ser-1'. In Mus musculus (Mouse), this protein is Casein kinase II subunit alpha (Csnk2a1).